The sequence spans 78 residues: Large ribosomal subunit protein uL24 (78 aa).

The protein belongs to the universal ribosomal protein uL24 family. In terms of assembly, part of the 50S ribosomal subunit.

One of two assembly initiator proteins, it binds directly to the 5'-end of the 23S rRNA, where it nucleates assembly of the 50S subunit. Its function is as follows. One of the proteins that surrounds the polypeptide exit tunnel on the outside of the subunit. The sequence is that of Large ribosomal subunit protein uL24 from Helicobacter hepaticus (strain ATCC 51449 / 3B1).